The following is a 237-amino-acid chain: UPF0758 protein Aave_3773 (237 aa).

Residues 115-237 (LFHSPRAVRD…SLSMAEEGLI (123 aa)) enclose the MPN domain. Residues H186, H188, and D199 each contribute to the Zn(2+) site. Residues 186–199 (HNHPSGQVQPSRAD) carry the JAMM motif motif.

It belongs to the UPF0758 family.

This chain is UPF0758 protein Aave_3773, found in Paracidovorax citrulli (strain AAC00-1) (Acidovorax citrulli).